A 61-amino-acid polypeptide reads, in one-letter code: Large ribosomal subunit protein uL29 (61 aa).

It belongs to the universal ribosomal protein uL29 family.

The chain is Large ribosomal subunit protein uL29 from Campylobacter lari (strain RM2100 / D67 / ATCC BAA-1060).